An 853-amino-acid polypeptide reads, in one-letter code: DNA mismatch repair protein MutS (853 aa).

614–621 contributes to the ATP binding site; the sequence is GPNMGGKS.

This sequence belongs to the DNA mismatch repair MutS family.

This protein is involved in the repair of mismatches in DNA. It is possible that it carries out the mismatch recognition step. This protein has a weak ATPase activity. In Escherichia coli (strain 55989 / EAEC), this protein is DNA mismatch repair protein MutS.